Here is a 507-residue protein sequence, read N- to C-terminus: MIAKSFIASFLFLCFAFSGVKADGCSEENGYYYCNQASEVEFTNVGYSSTYNEITNMDTSSCSCSSTPKSYGGNLAPFDEEFSFHFRGPIELKRFAVYYPDTSNALSSLRKRSNNQHMKRHPHHKRDDVIDSTLTVYETVMYTTAVYGDSATTPAASEAQASSDILSSLASLSSASTDNLAASVTPTTVAASVASSVDTDSASATISSVVDSATSSVSTVIPSSIISAAPPDSASESTPASTSYASSTTSATSTSTTSGSSGSSDWGRSSFYEADSGTSDNIVFLNNMGGSAGSGVWSSCFGNSLSFAASNGVDGASSSQVLENILVASDKEFSIWTATECNNDCGYYLPGIPAYHGFSGAKLVLMEFIMPHDSSSSYNQDMPAIWSLNAQIPRTLQYGNADCSCWTTGCGEFDIFEVLSTGNEKMIPTLHGSQGSSNGNGGGAGSSDYFARPTSSSMIGAVIYDTSSSGIYIIDVTDQNVSFDSTYSASDVDAWLQSGATIVQLSS.

The N-terminal stretch at 1–22 (MIAKSFIASFLFLCFAFSGVKA) is a signal peptide. A compositionally biased stretch (low complexity) spans 228 to 264 (AAPPDSASESTPASTSYASSTTSATSTSTTSGSSGSS). Residues 228–266 (AAPPDSASESTPASTSYASSTTSATSTSTTSGSSGSSDW) form a disordered region. An ExDxxE motif motif is present at residues 412 to 417 (EFDIFE). N480 carries N-linked (GlcNAc...) asparagine glycosylation.

Belongs to the PGA52 family.

It is found in the secreted. It carries out the reaction Hydrolysis of (1-&gt;3)-beta-D-glucosidic linkages in (1-&gt;3)-beta-D-glucans.. Functionally, probable circularly permuted 1,3-beta-glucanase involved in cell wall modification through beta-1,3-glucan network alterations such as increased branching or remodeling. The protein is Probable circularly permuted 1,3-beta-glucanase P23A10.11c YJL171C of Schizosaccharomyces pombe (strain 972 / ATCC 24843) (Fission yeast).